A 449-amino-acid chain; its full sequence is MRECISIHVGQAGVQIGNACWELYCLEHGIQPDGQMPSDKTIGGGDDSFNTFFSETGAGKHVPRAVFVDLEPTVIDEVRTGTYRQLFHPEQLITGKEDAANNYARGHYTIGKEIIDLVLDRIRKLADQCTGLQGFLVFHSFGGGTGSGFTSLLMERLSVDYGKKSKLEFSIYPAPQVSTAVVEPYNSILTTHTTLEHSDCAFMVDNEAIYDICRRNLDIERPTYTNLNRLISQIVSSITASLRFDGALNVDLTEFQTNLVPYPRIHFPLATYAPVISAEKAYHEQLTVAEITNACFEPANQMVKCDPRHGKYMACCLLYRGDVVPKDVNAAIATIKTKRTIQFVDWCPTGFKVGINYQPPTVVPGGDLARVQRAVCMLSNTTAIAEAWARLDHKFDLMYAKRAFVHWYVGEGMEEGEFSEAREDMAALEKDYEEVGADSAEGDDEGEEY.

The MREC motif signature appears at 1–4; it reads MREC. Residue glutamine 11 participates in GTP binding. Lysine 40 carries the N6-acetyllysine modification. Residues glutamate 71, serine 140, glycine 144, threonine 145, threonine 179, asparagine 206, and asparagine 228 each coordinate GTP. Mg(2+) is bound at residue glutamate 71. Glutamate 254 is a catalytic residue. Tyrosine 282 carries the post-translational modification 3'-nitrotyrosine. Tyrosine 432 carries the phosphotyrosine modification. Phosphoserine is present on serine 439. 3'-nitrotyrosine is present on tyrosine 449.

This sequence belongs to the tubulin family. Dimer of alpha and beta chains. A typical microtubule is a hollow water-filled tube with an outer diameter of 25 nm and an inner diameter of 15 nM. Alpha-beta heterodimers associate head-to-tail to form protofilaments running lengthwise along the microtubule wall with the beta-tubulin subunit facing the microtubule plus end conferring a structural polarity. Microtubules usually have 13 protofilaments but different protofilament numbers can be found in some organisms and specialized cells. Mg(2+) serves as cofactor. In terms of processing, some glutamate residues at the C-terminus are polyglycylated, resulting in polyglycine chains on the gamma-carboxyl group. Glycylation is mainly limited to tubulin incorporated into axonemes (cilia and flagella) whereas glutamylation is prevalent in neuronal cells, centrioles, axonemes, and the mitotic spindle. Both modifications can coexist on the same protein on adjacent residues, and lowering polyglycylation levels increases polyglutamylation, and reciprocally. Cilia and flagella glycylation is required for their stability and maintenance. Flagella glycylation controls sperm motility. Post-translationally, some glutamate residues at the C-terminus are polyglutamylated, resulting in polyglutamate chains on the gamma-carboxyl group. Polyglutamylation plays a key role in microtubule severing by spastin (SPAST). SPAST preferentially recognizes and acts on microtubules decorated with short polyglutamate tails: severing activity by SPAST increases as the number of glutamates per tubulin rises from one to eight, but decreases beyond this glutamylation threshold. Glutamylation is also involved in cilia motility. Acetylation of alpha chains at Lys-40 is located inside the microtubule lumen. This modification has been correlated with increased microtubule stability, intracellular transport and ciliary assembly. In terms of processing, methylation of alpha chains at Lys-40 is found in mitotic microtubules and is required for normal mitosis and cytokinesis contributing to genomic stability. Post-translationally, nitration of Tyr-449 is irreversible and interferes with normal dynein intracellular distribution. Undergoes a tyrosination/detyrosination cycle, the cyclic removal and re-addition of a C-terminal tyrosine residue by the enzymes tubulin tyrosine carboxypeptidase (MATCAP1, VASH1 or VASH2) and tubulin tyrosine ligase (TTL), respectively. In terms of processing, tyrosination promotes microtubule interaction with CAP-Gly domain-containing proteins such as CLIP1, CLIP2 and DCTN1. Tyrosination regulates the initiation of dynein-dynactin motility via interaction with DCTN1, which brings the dynein-dynactin complex into contact with microtubules. In neurons, tyrosinated tubulins mediate the initiation of retrograde vesicle transport. Post-translationally, detyrosination is involved in metaphase plate congression by guiding chromosomes during mitosis: detyrosination promotes interaction with CENPE, promoting pole-proximal transport of chromosomes toward the equator. Detyrosination increases microtubules-dependent mechanotransduction in dystrophic cardiac and skeletal muscle. In cardiomyocytes, detyrosinated microtubules are required to resist to contractile compression during contraction: detyrosination promotes association with desmin (DES) at force-generating sarcomeres, leading to buckled microtubules and mechanical resistance to contraction.

It is found in the cytoplasm. It localises to the cytoskeleton. It carries out the reaction GTP + H2O = GDP + phosphate + H(+). Tubulin is the major constituent of microtubules, a cylinder consisting of laterally associated linear protofilaments composed of alpha- and beta-tubulin heterodimers. Microtubules grow by the addition of GTP-tubulin dimers to the microtubule end, where a stabilizing cap forms. Below the cap, tubulin dimers are in GDP-bound state, owing to GTPase activity of alpha-tubulin. The chain is Tubulin alpha-1C chain (Tuba1c) from Rattus norvegicus (Rat).